We begin with the raw amino-acid sequence, 234 residues long: Orotidine 5'-phosphate decarboxylase (234 aa).

Residues Asp-14, Lys-36, 63–72 (DLKFHDIPNT), Thr-123, Arg-184, Gln-193, Gly-213, and Arg-214 each bind substrate. The active-site Proton donor is Lys-65.

This sequence belongs to the OMP decarboxylase family. Type 1 subfamily. As to quaternary structure, homodimer.

It carries out the reaction orotidine 5'-phosphate + H(+) = UMP + CO2. It functions in the pathway pyrimidine metabolism; UMP biosynthesis via de novo pathway; UMP from orotate: step 2/2. Its function is as follows. Catalyzes the decarboxylation of orotidine 5'-monophosphate (OMP) to uridine 5'-monophosphate (UMP). The polypeptide is Orotidine 5'-phosphate decarboxylase (Pseudoalteromonas translucida (strain TAC 125)).